The following is a 517-amino-acid chain: Crotonobetaine/carnitine--CoA ligase (517 aa).

Belongs to the ATP-dependent AMP-binding enzyme family.

It carries out the reaction 4-(trimethylamino)butanoate + ATP + CoA = 4-(trimethylamino)butanoyl-CoA + AMP + diphosphate. It catalyses the reaction crotonobetaine + ATP + CoA = crotonobetainyl-CoA + AMP + diphosphate. The enzyme catalyses (R)-carnitine + ATP + CoA = (R)-carnitinyl-CoA + AMP + diphosphate. The protein operates within amine and polyamine metabolism; carnitine metabolism. Functionally, catalyzes the transfer of CoA to carnitine, generating the initial carnitinyl-CoA needed for the CaiB reaction cycle. Also has activity toward crotonobetaine and gamma-butyrobetaine. The polypeptide is Crotonobetaine/carnitine--CoA ligase (Salmonella paratyphi B (strain ATCC BAA-1250 / SPB7)).